The chain runs to 125 residues: Small ribosomal subunit protein uS13 (125 aa).

This sequence belongs to the universal ribosomal protein uS13 family. As to quaternary structure, part of the 30S ribosomal subunit. Forms a loose heterodimer with protein S19. Forms two bridges to the 50S subunit in the 70S ribosome.

Located at the top of the head of the 30S subunit, it contacts several helices of the 16S rRNA. In the 70S ribosome it contacts the 23S rRNA (bridge B1a) and protein L5 of the 50S subunit (bridge B1b), connecting the 2 subunits; these bridges are implicated in subunit movement. Contacts the tRNAs in the A and P-sites. This is Small ribosomal subunit protein uS13 from Rickettsia prowazekii (strain Madrid E).